Here is a 525-residue protein sequence, read N- to C-terminus: G patch domain-containing protein 3 (525 aa).

2 disordered regions span residues 54-85 and 246-317; these read ERGP…PASD and EQEE…QERT. The span at 274 to 299 shows a compositional bias: acidic residues; the sequence is DEPEDEGQQQEEEEESGSEEDDDRGE. Basic and acidic residues predominate over residues 300 to 317; the sequence is EWERHEALHEDVTGQERT. The 49-residue stretch at 411–459 folds into the G-patch domain; that stretch reads TKGIGRKVMERQGWAEGQGLGSRCSGVPEALDGDGQHPRCKRGLGYHGE.

Interacts with mitochondrial MAVS; the interaction is markedly increased upon viral infection.

It localises to the nucleus. Its subcellular location is the cytoplasm. Functionally, involved in transcriptional regulation. It is able to activate transcription from CXCR4 promoter and therefore it might control neural crest cell migration involved in ocular and craniofacial development. Is a negative regulator of immune antiviral response, acting via down-regulation of RIG-I-like receptors signaling and inhibition of type I interferon production. The control mechanism involves interaction with mitochondrial MAVS and inhibition of MAVS assembly with downstream proteins implicated in antiviral response, such as TBK1 and TRAF6. This chain is G patch domain-containing protein 3 (Gpatch3), found in Mus musculus (Mouse).